The primary structure comprises 254 residues: 3-beta-hydroxysteroid dehydrogenase (254 aa).

Residues 12 to 40 (VTGG…SDIN) and Asp61 each bind NAD(+). Substrate is bound at residue Ser139. Tyr152 functions as the Proton acceptor in the catalytic mechanism. Lys156 provides a ligand contact to NAD(+).

This sequence belongs to the short-chain dehydrogenases/reductases (SDR) family. In terms of assembly, homotetramer.

It carries out the reaction testosterone + NAD(+) = androst-4-ene-3,17-dione + NADH + H(+). The catalysed reaction is testosterone + NADP(+) = androst-4-ene-3,17-dione + NADPH + H(+). This chain is 3-beta-hydroxysteroid dehydrogenase, found in Comamonas testosteroni (Pseudomonas testosteroni).